The following is a 671-amino-acid chain: Anti-sigma-I factor RsgI2 (671 aa).

Over 1–57 (MSHYTGIILKLESDRAIVLTDGLDFMELKLKPGMQRGQHVIFDESDLYSAGLITRYK) the chain is Cytoplasmic. The 48-residue stretch at 4-51 (YTGIILKLESDRAIVLTDGLDFMELKLKPGMQRGQHVIFDESDLYSAG) folds into the RsgI N-terminal anti-sigma domain. A helical transmembrane segment spans residues 58–78 (SIIMPFSAFAAAAAVFLVILF). Topologically, residues 79–671 (SLRFVSISQE…SGTLYWGIEP (593 aa)) are extracellular. 2 disordered regions span residues 290-323 (TEAQPVDIPKSSPTPASFTAHVPTPPKTPSIPHT) and 359-505 (PVPV…APTE). Residues 359 to 379 (PVPVSTPKPVSTPAYSSTPTP) are compositionally biased toward low complexity. Over residues 380–400 (ESTPVPVSTPKPASTPTPAST) the composition is skewed to pro residues. The segment covering 401–425 (PKPVSTPTHVSTPKPISTPTSTPRP) has biased composition (low complexity). Residues 426-446 (ASTPKPTSTPTPESTPKPTST) show a composition bias toward pro residues. The segment covering 447–491 (PAPVSTPTSTPIPTYTSTPASTPIPAYTSTPTSIPTLTPATSPAP) has biased composition (low complexity). Over residues 492–502 (TSSPTPIPSPA) the composition is skewed to pro residues. One can recognise a CBM3 domain in the interval 508-671 (LLTKIELQAY…SGTLYWGIEP (164 aa)). Ca(2+) is bound by residues T554, D556, D637, S640, and D641.

As to quaternary structure, interacts (via RsgI N-terminal anti-sigma domain) with SigI2.

It is found in the cell membrane. Functionally, anti-sigma factor for SigI2. Negatively regulates SigI2 activity through direct interaction. Binding of the polysaccharide substrate to the extracellular C-terminal sensing domain of RsgI2 may induce a conformational change in its N-terminal cytoplasmic region, leading to the release and activation of SigI2. The protein is Anti-sigma-I factor RsgI2 of Acetivibrio thermocellus (strain ATCC 27405 / DSM 1237 / JCM 9322 / NBRC 103400 / NCIMB 10682 / NRRL B-4536 / VPI 7372) (Clostridium thermocellum).